A 279-amino-acid chain; its full sequence is RxLR effector protein Avh331 (279 aa).

Residues 1–20 (MMQWSAILIRTCFSGSGGEA) form the signal peptide. Positions 86–106 (RSLRSQATNVDDDANVSIENR) match the RxLR-dEER motif. Residue Asn-100 is glycosylated (N-linked (GlcNAc...) asparagine). Residues 129–147 (ANKLWLMADVDPKSAFKLL) are W1 motif. The Y1 motif stretch occupies residues 153 to 174 (GVRFIDNPKMLQWLKFTKAYLD). Residues 178-208 (SGFGETSAHALLYEKIGGPDLSLLLLSLKDA) are l motif. The W2 motif stretch occupies residues 222 to 240 (QFGMWHDARIEPEQLAQTV). The tract at residues 250–271 (PKNDPKLQVIDDYAKYHRKHRK) is Y2 motif.

This sequence belongs to the RxLR effector family.

The protein localises to the secreted. It is found in the host cell. Effector that suppresses the host mitogen-activated protein kinase (MAPK)-based plant defense activated by the Phytophthora elicitor to promote colonization of the Phytophthora pathogen. Neither directly inhibits MAPK kinase activity nor interacts with MAPK proteins but acts downstream by suppressing transcriptional activation of resistance marker genes such as FRK1, WRKY22 and WRKY29. Confers avirulence in the presence of resistance protein Rps1k in host. This Phytophthora sojae (strain P6497) (Soybean stem and root rot agent) protein is RxLR effector protein Avh331.